We begin with the raw amino-acid sequence, 176 residues long: NAD(P)H-quinone oxidoreductase subunit 6, chloroplastic (176 aa).

The next 5 membrane-spanning stretches (helical) occupy residues 10–30, 32–52, 61–81, 92–112, and 152–172; these read FLLV…VLLT, PIYS…FYIL, AQLL…VMFM, LWTI…VSLI, and FFLP…GAIA.

It belongs to the complex I subunit 6 family. In terms of assembly, NDH is composed of at least 16 different subunits, 5 of which are encoded in the nucleus.

The protein localises to the plastid. Its subcellular location is the chloroplast thylakoid membrane. The catalysed reaction is a plastoquinone + NADH + (n+1) H(+)(in) = a plastoquinol + NAD(+) + n H(+)(out). The enzyme catalyses a plastoquinone + NADPH + (n+1) H(+)(in) = a plastoquinol + NADP(+) + n H(+)(out). Functionally, NDH shuttles electrons from NAD(P)H:plastoquinone, via FMN and iron-sulfur (Fe-S) centers, to quinones in the photosynthetic chain and possibly in a chloroplast respiratory chain. The immediate electron acceptor for the enzyme in this species is believed to be plastoquinone. Couples the redox reaction to proton translocation, and thus conserves the redox energy in a proton gradient. This chain is NAD(P)H-quinone oxidoreductase subunit 6, chloroplastic (ndhG), found in Gossypium hirsutum (Upland cotton).